A 363-amino-acid polypeptide reads, in one-letter code: sn-glycerol-3-phosphate import ATP-binding protein UgpC (363 aa).

The ABC transporter domain maps to V4–I235. G37–S44 contacts ATP.

The protein belongs to the ABC transporter superfamily. sn-glycerol-3-phosphate importer (TC 3.A.1.1.3) family. As to quaternary structure, the complex is composed of two ATP-binding proteins (UgpC), two transmembrane proteins (UgpA and UgpE) and a solute-binding protein (UgpB).

The protein resides in the cell inner membrane. The catalysed reaction is sn-glycerol 3-phosphate(out) + ATP + H2O = sn-glycerol 3-phosphate(in) + ADP + phosphate + H(+). In terms of biological role, part of the ABC transporter complex UgpBAEC involved in sn-glycerol-3-phosphate (G3P) import. Responsible for energy coupling to the transport system. The sequence is that of sn-glycerol-3-phosphate import ATP-binding protein UgpC from Rhodopseudomonas palustris (strain ATCC BAA-98 / CGA009).